A 209-amino-acid chain; its full sequence is Claudin-like protein ZF-A9 (209 aa).

4 helical membrane passes run 8-28 (LGTT…AIPL), 81-101 (AILV…FAGG), 114-134 (ALVA…GLVP), and 159-179 (FGAA…GGGL). The disordered stretch occupies residues 187-209 (GRTSSRGRYTPASQNGRERSEYV). Over residues 188–201 (RTSSRGRYTPASQN) the composition is skewed to polar residues.

Belongs to the claudin family.

The protein localises to the cell membrane. It is found in the cell junction. It localises to the tight junction. Its function is as follows. Component of tight junction (TJ) strands. The chain is Claudin-like protein ZF-A9 (cldng) from Danio rerio (Zebrafish).